The sequence spans 284 residues: Nucleotide-binding protein Sbal_3671 (284 aa).

8–15 (GRSGSGKS) provides a ligand contact to ATP. 56–59 (DVRN) is a GTP binding site.

It belongs to the RapZ-like family.

Displays ATPase and GTPase activities. This chain is Nucleotide-binding protein Sbal_3671, found in Shewanella baltica (strain OS155 / ATCC BAA-1091).